Reading from the N-terminus, the 461-residue chain is Ig heavy chain C region, membrane-bound form (461 aa).

The tract at residues 1 to 99 (ATPSPPTLYG…GESVWIKEIP (99 aa)) is CH1. A CH2 region spans residues 100–205 (DCKGDKVHPT…TQSRNITGSQ (106 aa)). Asn-164, Asn-200, Asn-245, Asn-275, Asn-374, Asn-411, Asn-415, and Asn-437 each carry an N-linked (GlcNAc...) asparagine glycan. Residues 206-308 (VPCSCNDPVI…PLRASIHKEE (103 aa)) form a CH3 region. Residues 309 to 418 (VKDLREPSVS…IINRTVNKSS (110 aa)) are CH4. The helical transmembrane segment at 438–458 (ASTFIILFFLSIFYRAAVTLV) threads the bilayer.

The protein localises to the cell membrane. This Heterodontus francisci (Horn shark) protein is Ig heavy chain C region, membrane-bound form.